The primary structure comprises 946 residues: Inositol-trisphosphate 3-kinase B (946 aa).

Disordered stretches follow at residues 19–128, 156–288, 308–472, 486–561, and 580–638; these read EMKS…EEAK, AQSS…TRSC, ARVT…GIPS, KDLK…RKAC, and GALE…HTLD. 3 positions are modified to phosphoserine: Ser43, Ser49, and Ser71. Low complexity predominate over residues 83–105; the sequence is NSSSGSGSGSSGSSVSSPSWAGR. Ser204 and Ser269 each carry phosphoserine. Residues 396 to 411 are compositionally biased toward polar residues; that stretch reads TTVSVQSAESSDSLSW. Positions 445-458 are enriched in low complexity; the sequence is GGSPTLGLLGGSPS. The segment covering 524-534 has biased composition (polar residues); it reads TGVQSEGTWES. Positions 599–612 are enriched in low complexity; that stretch reads SSSSASSTGFSSSY. ATP contacts are provided by residues Ser679, Lys690, 730 to 732, and Asp743; that span reads DDL. Substrate contacts are provided by Lys745 and Arg766. Residues 768–776 form a calmodulin-binding region; that stretch reads DMYQKMIEV. Substrate is bound at residue 793-800; the sequence is KPRYMQWR. Residues Lys817 and Asp897 each coordinate ATP. Lys900 contacts substrate.

It belongs to the inositol phosphokinase (IPK) family. As to quaternary structure, interacts with DMTN.

It is found in the cytoplasm. The protein resides in the cytoskeleton. It localises to the endoplasmic reticulum. It catalyses the reaction 1D-myo-inositol 1,4,5-trisphosphate + ATP = 1D-myo-inositol 1,3,4,5-tetrakisphosphate + ADP + H(+). Its activity is regulated as follows. IP3K is activated by calcium and calmodulin. Form B is much more sensitive to calcium/calmodulin than form A. Catalyzes the phosphorylation of 1D-myo-inositol 1,4,5-trisphosphate (InsP3) into 1D-myo-inositol 1,3,4,5-tetrakisphosphate and participates to the regulation of calcium homeostasis. The protein is Inositol-trisphosphate 3-kinase B of Homo sapiens (Human).